The sequence spans 129 residues: Glycine cleavage system H protein (129 aa).

The region spanning S24–M106 is the Lipoyl-binding domain. K65 is modified (N6-lipoyllysine).

This sequence belongs to the GcvH family. In terms of assembly, the glycine cleavage system is composed of four proteins: P, T, L and H. (R)-lipoate serves as cofactor.

Functionally, the glycine cleavage system catalyzes the degradation of glycine. The H protein shuttles the methylamine group of glycine from the P protein to the T protein. This Shewanella halifaxensis (strain HAW-EB4) protein is Glycine cleavage system H protein.